Consider the following 180-residue polypeptide: Vacuolar ATPase assembly protein VMA22 (180 aa).

Residues Gln-4–Gly-38 adopt a coiled-coil conformation. The disordered stretch occupies residues Thr-90–Leu-113.

As to quaternary structure, accessory component of the multisubunit proton-transporting vacuolar (V)-ATPase protein pump. Predominantly expressed in the heart, liver, kidney and testis and at lower levels in the brain and lung. Undetectable in the spleen and muscles.

Its subcellular location is the endosome. The protein resides in the lysosome. The protein localises to the endoplasmic reticulum-Golgi intermediate compartment. It is found in the cytoplasmic vesicle. It localises to the COPI-coated vesicle. Its subcellular location is the endoplasmic reticulum. Accessory component of the proton-transporting vacuolar (V)-ATPase protein pump involved in intracellular iron homeostasis. In aerobic conditions, required for intracellular iron homeostasis, thus triggering the activity of Fe(2+) prolyl hydroxylase (PHD) enzymes, and leading to HIF1A hydroxylation and subsequent proteasomal degradation. Necessary for endolysosomal acidification and lysosomal degradation. May be involved in Golgi homeostasis. The chain is Vacuolar ATPase assembly protein VMA22 (Vma22) from Mus musculus (Mouse).